A 513-amino-acid polypeptide reads, in one-letter code: Probable cytosol aminopeptidase (513 aa).

Residues K277 and D282 each coordinate Mn(2+). Residue K289 is part of the active site. Mn(2+) contacts are provided by D300, D359, and E361. The active site involves R363.

This sequence belongs to the peptidase M17 family. Requires Mn(2+) as cofactor.

It is found in the cytoplasm. It carries out the reaction Release of an N-terminal amino acid, Xaa-|-Yaa-, in which Xaa is preferably Leu, but may be other amino acids including Pro although not Arg or Lys, and Yaa may be Pro. Amino acid amides and methyl esters are also readily hydrolyzed, but rates on arylamides are exceedingly low.. The enzyme catalyses Release of an N-terminal amino acid, preferentially leucine, but not glutamic or aspartic acids.. Its function is as follows. Presumably involved in the processing and regular turnover of intracellular proteins. Catalyzes the removal of unsubstituted N-terminal amino acids from various peptides. This is Probable cytosol aminopeptidase from Mycobacterium sp. (strain KMS).